We begin with the raw amino-acid sequence, 164 residues long: MAPRSSTSKSATREKKDHKKAPIKKAIAKKDTKPTPTKGKAASASTTPVKKDVTPVKADTKKKIHKTKTMKETVSDAKKTVHAAAGDKKLSKKRPAKEAAKKAINPGKKAAAQPKSTKKEVKKDNKTAKKETKKDHKPAKKEAKKETKPAKKDAKKSSKPAKKN.

Residues 1 to 10 show a composition bias toward polar residues; that stretch reads MAPRSSTSKS. The tract at residues 1-164 is disordered; sequence MAPRSSTSKS…KKSSKPAKKN (164 aa). Residues 16 to 27 show a composition bias toward basic residues; the sequence is KDHKKAPIKKAI. Phosphothreonine is present on residues Thr47 and Thr54. Composition is skewed to basic and acidic residues over residues 49-61, 69-89, and 117-156; these read VKKD…ADTK, TMKE…GDKK, and TKKE…DAKK.

Cell-growth/division-associated phosphorylation by a CDC2-like kinase.

Its subcellular location is the nucleus. The protein resides in the chromosome. Its function is as follows. Histones H1 are necessary for the condensation of nucleosome chains into higher-order structures. This is Histone H1 (HHO) from Tetrahymena thermophila (strain SB210).